The sequence spans 258 residues: Tryptophan synthase alpha chain (258 aa).

Catalysis depends on proton acceptor residues glutamate 47 and aspartate 58.

It belongs to the TrpA family. In terms of assembly, tetramer of two alpha and two beta chains.

It carries out the reaction (1S,2R)-1-C-(indol-3-yl)glycerol 3-phosphate + L-serine = D-glyceraldehyde 3-phosphate + L-tryptophan + H2O. It functions in the pathway amino-acid biosynthesis; L-tryptophan biosynthesis; L-tryptophan from chorismate: step 5/5. The alpha subunit is responsible for the aldol cleavage of indoleglycerol phosphate to indole and glyceraldehyde 3-phosphate. The polypeptide is Tryptophan synthase alpha chain (Bacillus cereus (strain ATCC 14579 / DSM 31 / CCUG 7414 / JCM 2152 / NBRC 15305 / NCIMB 9373 / NCTC 2599 / NRRL B-3711)).